The chain runs to 440 residues: Glucose-1-phosphate adenylyltransferase (440 aa).

Alpha-D-glucose 1-phosphate-binding positions include Y125, G190, 205–206, and S223; that span reads EK.

Belongs to the bacterial/plant glucose-1-phosphate adenylyltransferase family. As to quaternary structure, homotetramer.

The catalysed reaction is alpha-D-glucose 1-phosphate + ATP + H(+) = ADP-alpha-D-glucose + diphosphate. It functions in the pathway glycan biosynthesis; glycogen biosynthesis. Involved in the biosynthesis of ADP-glucose, a building block required for the elongation reactions to produce glycogen. Catalyzes the reaction between ATP and alpha-D-glucose 1-phosphate (G1P) to produce pyrophosphate and ADP-Glc. The chain is Glucose-1-phosphate adenylyltransferase from Dechloromonas aromatica (strain RCB).